The sequence spans 514 residues: Peptide chain release factor 3 (514 aa).

Residues 8–268 (KKRRTFAIIS…IFLKFAPEPH (261 aa)) form the tr-type G domain. GTP contacts are provided by residues 17–24 (SHPDAGKT), 85–89 (DTPGH), and 139–142 (NKLD).

It belongs to the TRAFAC class translation factor GTPase superfamily. Classic translation factor GTPase family. PrfC subfamily.

The protein resides in the cytoplasm. Increases the formation of ribosomal termination complexes and stimulates activities of RF-1 and RF-2. It binds guanine nucleotides and has strong preference for UGA stop codons. It may interact directly with the ribosome. The stimulation of RF-1 and RF-2 is significantly reduced by GTP and GDP, but not by GMP. This is Peptide chain release factor 3 from Streptococcus pneumoniae (strain 70585).